Consider the following 371-residue polypeptide: Succinyl-diaminopimelate desuccinylase (371 aa).

A Zn(2+)-binding site is contributed by His68. Asp70 is a catalytic residue. Position 99 (Asp99) interacts with Zn(2+). The Proton acceptor role is filled by Glu130. The Zn(2+) site is built by Glu131, Glu159, and His344.

The protein belongs to the peptidase M20A family. DapE subfamily. In terms of assembly, homodimer. Zn(2+) serves as cofactor. Requires Co(2+) as cofactor.

The enzyme catalyses N-succinyl-(2S,6S)-2,6-diaminopimelate + H2O = (2S,6S)-2,6-diaminopimelate + succinate. The protein operates within amino-acid biosynthesis; L-lysine biosynthesis via DAP pathway; LL-2,6-diaminopimelate from (S)-tetrahydrodipicolinate (succinylase route): step 3/3. In terms of biological role, catalyzes the hydrolysis of N-succinyl-L,L-diaminopimelic acid (SDAP), forming succinate and LL-2,6-diaminopimelate (DAP), an intermediate involved in the bacterial biosynthesis of lysine and meso-diaminopimelic acid, an essential component of bacterial cell walls. This is Succinyl-diaminopimelate desuccinylase from Acidiphilium cryptum (strain JF-5).